The following is a 353-amino-acid chain: Putative transport protein YrrI (353 aa).

8 consecutive transmembrane segments (helical) span residues 8–28 (LLLW…FFML), 37–57 (LVIK…YLLL), 77–97 (IYVL…PVLI), 165–185 (FLIA…IELM), 220–240 (LLVC…FGLP), 243–263 (LILG…PFIG), 269–289 (LIAM…VFIL), and 311–331 (VVIM…GMIL).

Belongs to the autoinducer-2 exporter (AI-2E) (TC 2.A.86) family.

It localises to the cell membrane. The sequence is that of Putative transport protein YrrI (yrrI) from Bacillus subtilis (strain 168).